The chain runs to 145 residues: Transcription antitermination protein NusB (145 aa).

Belongs to the NusB family.

Its function is as follows. Involved in transcription antitermination. Required for transcription of ribosomal RNA (rRNA) genes. Binds specifically to the boxA antiterminator sequence of the ribosomal RNA (rrn) operons. The polypeptide is Transcription antitermination protein NusB (Burkholderia vietnamiensis (strain G4 / LMG 22486) (Burkholderia cepacia (strain R1808))).